We begin with the raw amino-acid sequence, 66 residues long: Conotoxin Cl14.1a (66 aa).

Residues 1 to 19 form the signal peptide; it reads MNVTAMFIVLLLTMPLTDG. The propeptide occupies 20–49; it reads FNIRAINGGELFGLVQRDAGNALDHGFYRR.

The protein belongs to the conotoxin L superfamily. In terms of processing, contains 2 disulfide bonds. Expressed by the venom duct.

The protein localises to the secreted. Probable neurotoxin with unknown target. Possibly targets ion channels. This peptide could be considered as an apoptosis activator in some cancers (tested on lung and breast cancer cell lines). Provokes the decrease of H1299 lung cancer cells viability after 24 hours treatment, and induces a high Bax/Bcl-2 ratio, which suggests that this peptide can activate apoptosis in H1299 cells. In addition, H1299 and H1437 lung cancer cell lines treated with this peptide have decreased cell viability, activated caspases, and reduced expression of the pro-survival protein NF-kappa-B (NFKB1), indicating activation of apoptosis. In synergy with MicroRNA-101-3p, this synthetic peptide inhibits breast cancer cells (SK-BR-3 and MCF-7) migration, invasion, and proliferation through suppressing the expression of the methyltransferase EZH2. In parallel, this synergy treatment is able to promote the apoptosis of breast cancer cells. Against microbes, this synthetic toxin (at micromolar concentrations) lowers viability and inhibits host cell invasion by the opportunistic parasite Toxoplasma gondii (tachyzoite form). In addition, it permits T.gondii intracellular replication to decrease while viability of the host cell is unaffected. The sequence is that of Conotoxin Cl14.1a from Californiconus californicus (California cone).